The following is a 569-amino-acid chain: Small ribosomal subunit protein bS1 (569 aa).

6 consecutive S1 motif domains span residues 52–116 (GAIL…LSRE), 134–199 (GSIV…VSRR), 220–288 (GERR…LGLK), 305–375 (GKRV…LGLK), 392–462 (GLRV…LGVK), and 479–548 (GSDI…LSIK).

This sequence belongs to the bacterial ribosomal protein bS1 family.

Binds mRNA; thus facilitating recognition of the initiation point. It is needed to translate mRNA with a short Shine-Dalgarno (SD) purine-rich sequence. The sequence is that of Small ribosomal subunit protein bS1 (rpsA) from Chlamydia trachomatis serovar D (strain ATCC VR-885 / DSM 19411 / UW-3/Cx).